The following is a 161-amino-acid chain: Cytochrome c-type biogenesis protein CcmE (161 aa).

Residues 1–8 (MNARRKKR) are Cytoplasmic-facing. A helical; Signal-anchor for type II membrane protein transmembrane segment spans residues 9–29 (LALATALIGGVAAIASLLLYA). The Periplasmic portion of the chain corresponds to 30–161 (LNSNLNLFYT…DYNAEQKSGY (132 aa)). Positions 131 and 135 each coordinate heme.

The protein belongs to the CcmE/CycJ family.

The protein localises to the cell inner membrane. In terms of biological role, heme chaperone required for the biogenesis of c-type cytochromes. Transiently binds heme delivered by CcmC and transfers the heme to apo-cytochromes in a process facilitated by CcmF and CcmH. This chain is Cytochrome c-type biogenesis protein CcmE, found in Shewanella woodyi (strain ATCC 51908 / MS32).